A 421-amino-acid polypeptide reads, in one-letter code: Enolase (421 aa).

Gln165 contacts (2R)-2-phosphoglycerate. Glu207 functions as the Proton donor in the catalytic mechanism. Positions 244, 285, and 312 each coordinate Mg(2+). Lys337, Arg366, Ser367, and Lys388 together coordinate (2R)-2-phosphoglycerate. The active-site Proton acceptor is the Lys337.

The protein belongs to the enolase family. Mg(2+) is required as a cofactor.

The protein resides in the cytoplasm. The protein localises to the secreted. Its subcellular location is the cell surface. It carries out the reaction (2R)-2-phosphoglycerate = phosphoenolpyruvate + H2O. It functions in the pathway carbohydrate degradation; glycolysis; pyruvate from D-glyceraldehyde 3-phosphate: step 4/5. In terms of biological role, catalyzes the reversible conversion of 2-phosphoglycerate (2-PG) into phosphoenolpyruvate (PEP). It is essential for the degradation of carbohydrates via glycolysis. This Ehrlichia canis (strain Jake) protein is Enolase.